Here is a 101-residue protein sequence, read N- to C-terminus: Small ribosomal subunit protein bS18c (101 aa).

The span at 1–19 shows a compositional bias: basic residues; sequence MDKSKQLFRKSKRSFRRRL. The interval 1–23 is disordered; that stretch reads MDKSKQLFRKSKRSFRRRLPPIG.

Belongs to the bacterial ribosomal protein bS18 family. As to quaternary structure, part of the 30S ribosomal subunit.

The protein localises to the plastid. The protein resides in the chloroplast. The sequence is that of Small ribosomal subunit protein bS18c from Acorus calamus (Sweet flag).